The sequence spans 298 residues: NAD kinase (298 aa).

The active-site Proton acceptor is the Asp80. NAD(+) is bound by residues 80–81 (DG), 154–155 (ND), Arg182, Asp184, 195–200 (TAYALS), Ala219, and Gln253.

It belongs to the NAD kinase family. The cofactor is a divalent metal cation.

It localises to the cytoplasm. It carries out the reaction NAD(+) + ATP = ADP + NADP(+) + H(+). Its function is as follows. Involved in the regulation of the intracellular balance of NAD and NADP, and is a key enzyme in the biosynthesis of NADP. Catalyzes specifically the phosphorylation on 2'-hydroxyl of the adenosine moiety of NAD to yield NADP. The protein is NAD kinase of Acidovorax ebreus (strain TPSY) (Diaphorobacter sp. (strain TPSY)).